The sequence spans 238 residues: Ribonuclease PH (238 aa).

Residues Arg86 and 124–126 (GTR) contribute to the phosphate site.

This sequence belongs to the RNase PH family. Homohexameric ring arranged as a trimer of dimers.

The enzyme catalyses tRNA(n+1) + phosphate = tRNA(n) + a ribonucleoside 5'-diphosphate. Its function is as follows. Phosphorolytic 3'-5' exoribonuclease that plays an important role in tRNA 3'-end maturation. Removes nucleotide residues following the 3'-CCA terminus of tRNAs; can also add nucleotides to the ends of RNA molecules by using nucleoside diphosphates as substrates, but this may not be physiologically important. Probably plays a role in initiation of 16S rRNA degradation (leading to ribosome degradation) during starvation. The protein is Ribonuclease PH of Pectobacterium atrosepticum (strain SCRI 1043 / ATCC BAA-672) (Erwinia carotovora subsp. atroseptica).